Reading from the N-terminus, the 118-residue chain is V-type proton ATPase subunit G 3 (118 aa).

Positions 1–34 are disordered; it reads MTSQSQGIHQLLQAEKRAKDKLEEAKKRKGKRLK. Positions 5–54 form a coiled coil; sequence SQGIHQLLQAEKRAKDKLEEAKKRKGKRLKQAKEEAMVEIDQYRMQRDKE. The span at 14 to 26 shows a compositional bias: basic and acidic residues; it reads AEKRAKDKLEEAK.

It belongs to the V-ATPase G subunit family. V-ATPase is a heteromultimeric enzyme made up of two complexes: the ATP-hydrolytic V1 complex and the proton translocation V0 complex. The V1 complex consists of three catalytic AB heterodimers that form a heterohexamer, three peripheral stalks each consisting of EG heterodimers, one central rotor including subunits D and F, and the regulatory subunits C and H. The proton translocation complex V0 consists of the proton transport subunit a, a ring of proteolipid subunits c9c'', rotary subunit d, subunits e and f, and the accessory subunits ATP6AP1/Ac45 and ATP6AP2/PRR. Kidney.

Functionally, subunit of the V1 complex of vacuolar(H+)-ATPase (V-ATPase), a multisubunit enzyme composed of a peripheral complex (V1) that hydrolyzes ATP and a membrane integral complex (V0) that translocates protons. V-ATPase is responsible for acidifying and maintaining the pH of intracellular compartments and in some cell types, is targeted to the plasma membrane, where it is responsible for acidifying the extracellular environment. The polypeptide is V-type proton ATPase subunit G 3 (ATP6V1G3) (Homo sapiens (Human)).